We begin with the raw amino-acid sequence, 938 residues long: Isoleucine--tRNA ligase (938 aa).

Residues 58–68 (PYANGSIHIGH) carry the 'HIGH' region motif. Position 183 is an N6-acetyllysine (K183). E561 lines the L-isoleucyl-5'-AMP pocket. Residues 602-606 (KMSKS) carry the 'KMSKS' region motif. Residue K605 participates in ATP binding. Positions 901, 904, 921, and 924 each coordinate Zn(2+).

This sequence belongs to the class-I aminoacyl-tRNA synthetase family. IleS type 1 subfamily. Monomer. Zn(2+) serves as cofactor.

It is found in the cytoplasm. The catalysed reaction is tRNA(Ile) + L-isoleucine + ATP = L-isoleucyl-tRNA(Ile) + AMP + diphosphate. Functionally, catalyzes the attachment of isoleucine to tRNA(Ile). As IleRS can inadvertently accommodate and process structurally similar amino acids such as valine, to avoid such errors it has two additional distinct tRNA(Ile)-dependent editing activities. One activity is designated as 'pretransfer' editing and involves the hydrolysis of activated Val-AMP. The other activity is designated 'posttransfer' editing and involves deacylation of mischarged Val-tRNA(Ile). This is Isoleucine--tRNA ligase from Escherichia coli O17:K52:H18 (strain UMN026 / ExPEC).